Consider the following 132-residue polypeptide: Large ribosomal subunit protein bL12 (132 aa).

The tract at residues 112–132 is disordered; sequence KEAADKAKTQLEGAGGTINLK.

The protein belongs to the bacterial ribosomal protein bL12 family. Homodimer. Part of the ribosomal stalk of the 50S ribosomal subunit. Forms a multimeric L10(L12)X complex, where L10 forms an elongated spine to which 2 to 4 L12 dimers bind in a sequential fashion. Binds GTP-bound translation factors.

Its function is as follows. Forms part of the ribosomal stalk which helps the ribosome interact with GTP-bound translation factors. Is thus essential for accurate translation. The chain is Large ribosomal subunit protein bL12 from Leifsonia xyli subsp. xyli (strain CTCB07).